A 300-amino-acid chain; its full sequence is ClpXP adapter protein SpxH (300 aa).

It belongs to the SpxH family. Interacts with Spx.

The protein localises to the cytoplasm. Adapter protein required for efficient degradation of Spx by ClpXP under non-stress conditions. Interaction with Spx stabilizes Spx and exposes the C-terminus of Spx for recognition and proteolysis by ClpXP. In Shouchella clausii (strain KSM-K16) (Alkalihalobacillus clausii), this protein is ClpXP adapter protein SpxH.